The chain runs to 704 residues: Elongation factor G (704 aa).

Residues 8–290 (EKYRNIGICA…GVVRYLPAPN (283 aa)) form the tr-type G domain. GTP-binding positions include 17–24 (AHVDAGKT), 88–92 (DTPGH), and 142–145 (NKMD).

Belongs to the TRAFAC class translation factor GTPase superfamily. Classic translation factor GTPase family. EF-G/EF-2 subfamily.

Its subcellular location is the cytoplasm. Functionally, catalyzes the GTP-dependent ribosomal translocation step during translation elongation. During this step, the ribosome changes from the pre-translocational (PRE) to the post-translocational (POST) state as the newly formed A-site-bound peptidyl-tRNA and P-site-bound deacylated tRNA move to the P and E sites, respectively. Catalyzes the coordinated movement of the two tRNA molecules, the mRNA and conformational changes in the ribosome. The polypeptide is Elongation factor G (Francisella tularensis subsp. tularensis (strain FSC 198)).